A 156-amino-acid polypeptide reads, in one-letter code: Ribosome maturation factor RimP (156 aa).

The protein belongs to the RimP family.

Its subcellular location is the cytoplasm. In terms of biological role, required for maturation of 30S ribosomal subunits. The polypeptide is Ribosome maturation factor RimP (Synechococcus sp. (strain JA-2-3B'a(2-13)) (Cyanobacteria bacterium Yellowstone B-Prime)).